Consider the following 142-residue polypeptide: Galactose-6-phosphate isomerase subunit LacA (142 aa).

The protein belongs to the LacAB/RpiB family. In terms of assembly, heteromultimeric protein consisting of LacA and LacB.

It catalyses the reaction aldehydo-D-galactose 6-phosphate = keto-D-tagatose 6-phosphate. Its pathway is carbohydrate metabolism; D-galactose 6-phosphate degradation; D-tagatose 6-phosphate from D-galactose 6-phosphate: step 1/1. In Staphylococcus haemolyticus (strain JCSC1435), this protein is Galactose-6-phosphate isomerase subunit LacA.